We begin with the raw amino-acid sequence, 4095 residues long: Protein adenylyltransferase and cysteine protease IbpA (4095 aa).

An N-terminal signal peptide occupies residues 1 to 97 (MNKNCYKLIF…MVAAPNFAQS (97 aa)). 2 binds bovine IgG2 Fc regions span residues 972 to 1515 (SERI…FVKA) and 1116 to 1255 (SEVQ…FLKE). Disordered regions lie at residues 1082 to 1117 (EVSD…LPSE), 1130 to 1154 (KEKA…LQSD), 1204 to 1223 (QEAL…AKAK), 1625 to 1652 (TVSH…TGFT), and 1705 to 1732 (EEDE…QKEE). Positions 1087–1096 (WERDPDEPDE) are enriched in acidic residues. Basic and acidic residues-rich tracts occupy residues 1097 to 1117 (PDYK…LPSE) and 1130 to 1139 (KEKAQQKRQA). Residues 1116–1247 (SEVQDKLRQK…AKDHQIEEAL (132 aa)) are a coiled coil. Over residues 1716 to 1727 (KAKAAPDATDNA) the composition is skewed to low complexity. Tandem repeats lie at residues 2250–2271 (YSTL…SDDI), 2272–2295 (YSLL…AEGA), 2296–2317 (YDLL…SDDL), 2318–2343 (YSTV…AAGP), 2344–2365 (YSLL…GEGP), 2366–2387 (YSLL…SNST), 2388–2413 (YSTV…VAGP), 2414–2435 (YSLL…GEGP), 2436–2457 (YSLL…SDSP), 2458–2483 (YSTV…VAGP), 2484–2505 (YSLL…GEGP), and 2506–2527 (YSLL…SDSP). The tract at residues 2250 to 2527 (YSTLGDQNAN…RTLGGESDSP (278 aa)) is 12 X 22 AA approximate repeats. 2 stretches are compositionally biased toward polar residues: residues 2592–2611 (SDTE…TRNA) and 2794–2803 (TAPQKTSPVK). Disordered stretches follow at residues 2592–2617 (SDTE…PLPP), 2765–2809 (TIGE…SAEG), 2825–2894 (AKGQ…SPKR), 2914–2933 (LKSK…EPIY), 2943–3033 (LARA…KSED), and 3049–3069 (NKSQ…PNYD). Positions 2880 to 2889 (PFPSEFSSEP) are enriched in low complexity. Composition is skewed to polar residues over residues 2977–2996 (SNLS…QSVA) and 3005–3018 (AESN…QKLQ). Positions 3052–3062 (QAKEAKSEQET) are enriched in basic and acidic residues. One can recognise a Fido 1 domain in the interval 3218–3355 (LTVEMIEKLN…AEVVKEFLTE (138 aa)). The tract at residues 3222–4095 (MIEKLNHGLR…FNVVNYKKNN (874 aa)) is yopT-like. The binds bovine IgG2 Fc stretch occupies residues 3354 to 3698 (TELGKKSSPQ…VDFINRAKNE (345 aa)). 2 disordered regions span residues 3357-3415 (GKKS…PSVP) and 3432-3454 (AELK…ATGV). Polar residues-rich tracts occupy residues 3360–3379 (SSPQ…SPVT) and 3388–3401 (VENT…TIKQ). The span at 3443-3454 (KAAEKSEGATGV) shows a compositional bias: basic and acidic residues. The interval 3535–3557 (IPEATVKQMSHLPEFDDILTEGA) is arm region. The 138-residue stretch at 3640-3777 (LTVQMIENLN…SEVVVEFLKE (138 aa)) folds into the Fido 2 domain. ATP contacts are provided by residues 3670-3671 (KE), 3722-3724 (GNG), arginine 3728, and glutamine 3757. A compositionally biased stretch (basic and acidic residues) spans 3783-3798 (SKEDNEQNLEKTDRTS). The interval 3783–3829 (SKEDNEQNLEKTDRTSTDLTESAVENSAALSSGTVRSATVSETVTET) is disordered. Over residues 3799-3815 (TDLTESAVENSAALSSG) the composition is skewed to polar residues. Residues 3816–3829 (TVRSATVSETVTET) are compositionally biased toward low complexity. Catalysis depends on for cysteine protease activity residues cysteine 3910, histidine 4033, and aspartate 4048.

This sequence in the central section; belongs to the fic family. In the C-terminal section; belongs to the peptidase C58 family. Immunoglobulin-binding protein. Post-translationally, the long form of the protein is probably processed, and/or the transcript may be subject to differential translational initiation.

The protein resides in the secreted. The protein localises to the cell outer membrane. It carries out the reaction L-tyrosyl-[protein] + ATP = O-(5'-adenylyl)-L-tyrosyl-[protein] + diphosphate. It catalyses the reaction L-threonyl-[protein] + ATP = 3-O-(5'-adenylyl)-L-threonyl-[protein] + diphosphate. Functionally, adenylyltransferase involved in virulence by mediating the addition of adenosine 5'-monophosphate (AMP) to specific tyrosine residue of host Rho GTPases RhoA, Rac and Cdc42. The resulting AMPylation inactivates Rho GTPases, thereby inhibiting actin assembly in infected cells. Probably also acts as a cysteine protease, which may play a central role after invasion of host cell and in virulence. Possible member (with IbpB) of a 2 partner secretion. Probably able to bind bovine epithelial cells (host cells). May participate in the formation of fibrils at the surface of the bacteria. In Histophilus somni (strain 2336) (Haemophilus somnus), this protein is Protein adenylyltransferase and cysteine protease IbpA (ibpA).